The chain runs to 312 residues: Malate dehydrogenase (312 aa).

NAD(+)-binding positions include 7–13 (GAAGGIG) and aspartate 34. Arginine 81 and arginine 87 together coordinate substrate. Residues asparagine 94 and 117 to 119 (ITN) each bind NAD(+). Substrate-binding residues include asparagine 119 and arginine 153. The Proton acceptor role is filled by histidine 177. Methionine 227 contributes to the NAD(+) binding site.

Belongs to the LDH/MDH superfamily. MDH type 1 family. In terms of assembly, homodimer.

It carries out the reaction (S)-malate + NAD(+) = oxaloacetate + NADH + H(+). Its function is as follows. Catalyzes the reversible oxidation of malate to oxaloacetate. The chain is Malate dehydrogenase from Escherichia coli (strain SE11).